Here is a 240-residue protein sequence, read N- to C-terminus: Zein-alpha 19C1 (240 aa).

An N-terminal signal peptide occupies residues 1-21 (MATKIFSLLMLLALSACVANA).

The protein belongs to the zein family.

Zeins are major seed storage proteins. This Zea mays (Maize) protein is Zein-alpha 19C1.